The primary structure comprises 182 residues: Large ribosomal subunit protein uL15 (182 aa).

The segment at 1 to 52 (MDLSSLRPAKGAVKNKKRIGRGPGSGNGTTAGKGNKGQQSRSGYTRPVSEGG) is disordered. The span at 21–35 (RGPGSGNGTTAGKGN) shows a compositional bias: gly residues.

The protein belongs to the universal ribosomal protein uL15 family. In terms of assembly, part of the 50S ribosomal subunit.

Binds to the 23S rRNA. This Chlorobium phaeobacteroides (strain BS1) protein is Large ribosomal subunit protein uL15.